The sequence spans 376 residues: Chaperone protein DnaJ (376 aa).

The 66-residue stretch at 5–70 (DYYETLGVQK…EKRAAYDQYG (66 aa)) folds into the J domain. A CR-type zinc finger spans residues 133–211 (GTTKDIKINT…CHGDGRVHKK (79 aa)). Positions 146, 149, 163, 166, 185, 188, 199, and 202 each coordinate Zn(2+). CXXCXGXG motif repeat units follow at residues 146-153 (CDHCDGSG), 163-170 (CPTCHGHG), 185-192 (CPTCQGSG), and 199-206 (CKHCHGDG).

The protein belongs to the DnaJ family. Homodimer. Requires Zn(2+) as cofactor.

The protein localises to the cytoplasm. Its function is as follows. Participates actively in the response to hyperosmotic and heat shock by preventing the aggregation of stress-denatured proteins and by disaggregating proteins, also in an autonomous, DnaK-independent fashion. Unfolded proteins bind initially to DnaJ; upon interaction with the DnaJ-bound protein, DnaK hydrolyzes its bound ATP, resulting in the formation of a stable complex. GrpE releases ADP from DnaK; ATP binding to DnaK triggers the release of the substrate protein, thus completing the reaction cycle. Several rounds of ATP-dependent interactions between DnaJ, DnaK and GrpE are required for fully efficient folding. Also involved, together with DnaK and GrpE, in the DNA replication of plasmids through activation of initiation proteins. This Mannheimia succiniciproducens (strain KCTC 0769BP / MBEL55E) protein is Chaperone protein DnaJ.